The following is a 291-amino-acid chain: MVNLPKFTMRDLVESGVHFGHKASRWNPKMAPYIYGVYNDIHIINLQNTVVLLKNALKALYDVVLKRGRVLFIGTKVQASAIIADEAIRCGQYYVNNRWLGGMLTNWETISLSIKKLKEYEKLIENVDNQFTKKELLLFEKKRAKLDRSIGGICNMGGLPHVLFVIDTNKEHIAIKEANKLNIPVIAVLDTNSDPTGIDYPIPGNDDAVRSIDFFCKIVSDTILEAIRSDLAKSGINVDGIKDFSVEKRDDLLRTSNRDNKNNKNNNNTDNTDNAASIKEEDLIGGSNNEN.

Positions 254–291 are disordered; the sequence is RTSNRDNKNNKNNNNTDNTDNAASIKEEDLIGGSNNEN. The segment covering 263 to 277 has biased composition (low complexity); sequence NKNNNNTDNTDNAAS.

The protein belongs to the universal ribosomal protein uS2 family.

This chain is Small ribosomal subunit protein uS2, found in Ehrlichia canis (strain Jake).